The following is a 455-amino-acid chain: Putative non-structural protein (455 aa).

Basic and acidic residues predominate over residues 262 to 276 (KERKTTHKTLVEDTH). A disordered region spans residues 262–341 (KERKTTHKTL…GVLTKKKSLK (80 aa)).

The chain is Putative non-structural protein from Bombyx mori (Silk moth).